Reading from the N-terminus, the 110-residue chain is UPF0060 membrane protein MMAR_2961 (110 aa).

Transmembrane regions (helical) follow at residues 6 to 26, 32 to 52, 61 to 81, and 90 to 110; these read ILLFIVAAVAEIGGAWLVWQG, GLAWIGAGVIALGLYGFVATL, ILAAYGGIFVAGSLLWGMAFD, and IVGALVCLAGVGVIMYAPRAH.

This sequence belongs to the UPF0060 family.

Its subcellular location is the cell membrane. This Mycobacterium marinum (strain ATCC BAA-535 / M) protein is UPF0060 membrane protein MMAR_2961.